The following is a 186-amino-acid chain: MSDAFDINDLKRRMEGAVNALKHDLGGLRTGRASASLLEPITIEAYGSTMPINQVANISVPESRMLSVSVWDKSMVGAVERAIRDSGLGLNPITDGMTLRIRLPELNEQRRKELVKIAHQYAEQGRIAARHVRRDGMDQLKKLEKDSVISQDESRVLSEKVQKLTDDTIAEMDKIVAVKEGEIMQV.

It belongs to the RRF family.

Its subcellular location is the cytoplasm. In terms of biological role, responsible for the release of ribosomes from messenger RNA at the termination of protein biosynthesis. May increase the efficiency of translation by recycling ribosomes from one round of translation to another. This Brucella melitensis biotype 2 (strain ATCC 23457) protein is Ribosome-recycling factor.